The chain runs to 1427 residues: DNA-directed RNA polymerase subunit beta' (1427 aa).

4 residues coordinate Zn(2+): Cys70, Cys72, Cys85, and Cys88. 3 residues coordinate Mg(2+): Asp461, Asp463, and Asp465. Cys838, Cys912, Cys919, and Cys922 together coordinate Zn(2+).

The protein belongs to the RNA polymerase beta' chain family. In terms of assembly, the RNAP catalytic core consists of 2 alpha, 1 beta, 1 beta' and 1 omega subunit. When a sigma factor is associated with the core the holoenzyme is formed, which can initiate transcription. Requires Mg(2+) as cofactor. Zn(2+) serves as cofactor.

It carries out the reaction RNA(n) + a ribonucleoside 5'-triphosphate = RNA(n+1) + diphosphate. In terms of biological role, DNA-dependent RNA polymerase catalyzes the transcription of DNA into RNA using the four ribonucleoside triphosphates as substrates. This Sorangium cellulosum (strain So ce56) (Polyangium cellulosum (strain So ce56)) protein is DNA-directed RNA polymerase subunit beta'.